The chain runs to 1328 residues: Tubulin polyglutamylase TTLL5 (1328 aa).

The segment at 1 to 22 (MPVVMARDLEETASSSEDEDLA) is disordered. In terms of domain architecture, TTL spans 62 to 407 (RYHLSYKIVR…VCQDPAQRTS (346 aa)). ATP is bound by residues K180, 186 to 187 (RG), 208 to 211 (SRYI), and 221 to 223 (KFD). A protein is bound at residue R186. Position 247 (R247) interacts with L-glutamate. 268–269 (TN) serves as a coordination point for ATP. 3 residues coordinate L-glutamate: Y270, S271, and K293. Positions 353, 366, and 368 each coordinate Mg(2+). Residues 378–488 (PLDLKIKASM…RGGFIRIFPT (111 aa)) are c-MTBD region. K384 provides a ligand contact to L-glutamate. 7 disordered regions span residues 411–436 (IYPSFESSRRNPFQKPQRTRPLSASD), 585–631 (AQPA…QAKY), 834–853 (HSKSSKNSSSYSDSGAKGDH), 948–975 (PALLLSPVPDNAPPSIHSGTQNVSPAGL), 1006–1032 (SSAKAAGSCHPHKHHSGIAKTQKEGED), 1085–1129 (RSSA…LQTG), and 1212–1271 (RISS…QLNG). The span at 420-432 (RNPFQKPQRTRPL) shows a compositional bias: polar residues. Residues 597–617 (ESEEEEEVGLDNDDEEQEASQ) show a composition bias toward acidic residues. A compositionally biased stretch (low complexity) spans 838–847 (SKNSSSYSDS). Composition is skewed to polar residues over residues 1116 to 1128 (THSSPPGSRSLQT), 1214 to 1227 (SSATTGGQKPNTLP), 1234 to 1248 (PNSSTLVSKPASNHK), and 1257 to 1271 (QRASKGSSAEGQLNG).

This sequence belongs to the tubulin--tyrosine ligase family. In terms of assembly, interacts with the transcriptional coactivators NCOA1/SRC-1 and NCOA2/TIF2. It depends on Mg(2+) as a cofactor. Highly expressed in brain, kidney, liver, spleen and testis. Expressed in heart, lung, muscle and trachea.

The protein resides in the cell projection. It localises to the cilium. It is found in the cytoplasm. The protein localises to the cytoskeleton. Its subcellular location is the cilium basal body. The protein resides in the nucleus. The catalysed reaction is L-glutamyl-[protein] + L-glutamate + ATP = gamma-L-glutamyl-L-glutamyl-[protein] + ADP + phosphate + H(+). The enzyme catalyses (L-glutamyl)(n)-gamma-L-glutamyl-L-glutamyl-[protein] + L-glutamate + ATP = (L-glutamyl)(n+1)-gamma-L-glutamyl-L-glutamyl-[protein] + ADP + phosphate + H(+). In terms of biological role, polyglutamylase which modifies tubulin, generating polyglutamate side chains on the gamma-carboxyl group of specific glutamate residues within the C-terminal tail of tubulin. Preferentially mediates ATP-dependent initiation step of the polyglutamylation reaction over the elongation step. Preferentially modifies the alpha-tubulin tail over a beta-tail. Required for CCSAP localization to both polyglutamylated spindle and cilia microtubules. Increases the effects of transcriptional coactivator NCOA2/TIF2 in glucocorticoid receptor-mediated repression and induction and in androgen receptor-mediated induction. The protein is Tubulin polyglutamylase TTLL5 of Mus musculus (Mouse).